We begin with the raw amino-acid sequence, 284 residues long: RNase adapter protein RapZ (284 aa).

Residue Gly8 to Ser15 participates in ATP binding. Asp56 to Asn59 serves as a coordination point for GTP. The interval Arg266–Gln284 is RNA-binding.

The protein belongs to the RapZ-like family. RapZ subfamily. As to quaternary structure, homotrimer.

Its function is as follows. Modulates the synthesis of GlmS, by affecting the processing and stability of the regulatory small RNA GlmZ. When glucosamine-6-phosphate (GlcN6P) concentrations are high in the cell, RapZ binds GlmZ and targets it to cleavage by RNase E. Consequently, GlmZ is inactivated and unable to activate GlmS synthesis. Under low GlcN6P concentrations, RapZ is sequestered and inactivated by an other regulatory small RNA, GlmY, preventing GlmZ degradation and leading to synthesis of GlmS. This Yersinia pseudotuberculosis serotype O:1b (strain IP 31758) protein is RNase adapter protein RapZ.